Reading from the N-terminus, the 737-residue chain is NAD-dependent protein deacetylase sirtuin-1 (737 aa).

Low complexity predominate over residues Met-1 to Ala-28. 2 disordered regions span residues Met-1–Pro-56 and Glu-75–Ala-125. Ala-2 is subject to N-acetylalanine. Residues Ala-2–Ala-131 are interaction with CLOCK. The tract at residues Ala-2–Arg-268 is interaction with H1-4. Phosphoserine is present on residues Ser-14 and Ser-25. Positions Leu-32 to Asp-39 match the Nuclear localization signal motif. Phosphoserine; by MAPK8 is present on Ser-46. Composition is skewed to low complexity over residues Ser-46–Pro-56 and Glu-75–Gly-94. Residues Asp-111–Ala-123 are compositionally biased toward acidic residues. Residues Arg-135–Pro-533 form an interaction with CCAR2 region. The short motif at Leu-138 to Leu-145 is the Nuclear export signal element. Residues Ser-151, Ser-154, Ser-164, and Ser-165 each carry the phosphoserine modification. The segment at Cys-152–Arg-171 is disordered. The Nuclear localization signal motif lies at Pro-223–Lys-230. The 261-residue stretch at Lys-228 to Glu-488 folds into the Deacetylase sirtuin-type domain. Lys-230 bears the N6-acetyllysine mark. The required for interaction with the sumoylated form of CCAR2 stretch occupies residues Ile-248–Leu-251. Residues Gly-253–Tyr-272 and Gln-337–Asp-340 contribute to the NAD(+) site. The active-site Proton acceptor is His-355. Positions 363 and 366 each coordinate Zn(2+). At Lys-369 the chain carries N6-acetyllysine. Zn(2+) is bound by residues Cys-387 and Cys-390. Cys-387 and Cys-390 each carry S-nitrosocysteine. The residue at position 422 (Lys-422) is an N6-acetyllysine. The Nuclear export signal signature appears at Val-425–Ile-431. Residues Gly-432–Ser-434, Asn-457–Glu-459, and Cys-474 contribute to the NAD(+) site. An N6-acetyllysine modification is found at Lys-505. Residues Val-514 to Gln-539 are disordered. Thr-522 bears the Phosphothreonine; by DYRK1A, DYRK3 and MAPK8 mark. Ser-527 is subject to Phosphoserine. The span at Asp-529–Gln-539 shows a compositional bias: polar residues. Thr-536 bears the Phosphothreonine mark. N6-acetyllysine is present on Lys-600. Phosphoserine; by CaMK2 is present on residues Ser-649 and Ser-651. Residues Asp-653–Asp-713 form a disordered region. The segment covering Leu-656–Glu-676 has biased composition (low complexity). Over residues Glu-677 to Glu-697 the composition is skewed to acidic residues. Ser-737 carries the post-translational modification Phosphoserine.

The protein belongs to the sirtuin family. Class I subfamily. As to quaternary structure, interacts with XBP1 isoform 2. Found in a complex with PCAF and MYOD1 Component of the eNoSC complex, composed of SIRT1, SUV39H1 and RRP8. Interacts with HES1, HEY2 and PML. Interacts with RPS19BP1/AROS. Interacts with CCAR2 (via N-terminus); the interaction disrupts the interaction between SIRT1 and p53/TP53. Interacts with SETD7; the interaction induces the dissociation of SIRT1 from p53/TP53 and increases p53/TP53 activity. Interacts with MYCN, NR1I2, CREBZF, TSC2, TLE1, FOS, JUN, NR0B2, PPARG, NCOR, IRS1, IRS2 and NMNAT1. Interacts with HNF1A; the interaction occurs under nutrient restriction. Interacts with SUZ12; the interaction mediates the association with the PRC4 histone methylation complex which is specific as an association with PCR2 and PCR3 complex variants is not found. Interacts with FOXO1; the interaction deacetylates FOXO1, enhances its DNA-binding ability and increases its transcriptional activity. Interacts with BCL6; leads to a epigenetic repression of specific target genes. Interacts with CLOCK, BMAL1 and PER2. Interacts with PPARA; the interaction seems to be modulated by NAD(+) levels. Interacts with NR1H3 and this interaction is inhibited in the presence of CCAR2. Interacts with CHEK2 and p53/TP53. Exhibits a preferential interaction with sumoylated CCAR2 over its unmodified form. Interacts with PACS2. Interacts with SIRT7. Interacts with PUS7. Interacts with TULP3. Interacts with MORN3; the interaction enhances the ubiquitination of p53/TP53. Requires Zn(2+) as cofactor. In terms of processing, methylated on multiple lysine residues; methylation is enhanced after DNA damage and is dispensable for deacetylase activity toward p53/TP53. Phosphorylated. Phosphorylated by STK4/MST1, resulting in inhibition of SIRT1-mediated p53/TP53 deacetylation. Phosphorylation by MAPK8/JNK1 at Ser-46 and Thr-522 leads to increased nuclear localization and enzymatic activity. Phosphorylation at Thr-522 by DYRK1A and DYRK3 activates deacetylase activity and promotes cell survival. Phosphorylation by mammalian target of rapamycin complex 1 (mTORC1) at Ser-46 inhibits deacetylation activity. Phosphorylated by CaMK2, leading to increased p53/TP53 and NF-kappa-B p65/RELA deacetylation activity. Post-translationally, proteolytically cleaved by cathepsin B upon TNF-alpha treatment to yield catalytic inactive but stable SirtT1 75 kDa fragment (75SirT1). In terms of processing, S-nitrosylated by GAPDH, leading to inhibit the NAD-dependent protein deacetylase activity. Acetylated at various Lys residues. Deacetylated via an autocatalytic mechanism. Autodeacetylation at Lys-230 promotes its protein deacetylase activity. Post-translationally, ubiquitinated; leading to degradation. Deubiquitinated by USP22; leading to stabilization. As to expression, widely expressed. Weakly expressed in liver and skeletal muscle.

The protein resides in the nucleus. It localises to the PML body. The protein localises to the cytoplasm. Its subcellular location is the mitochondrion. The catalysed reaction is N(6)-acetyl-L-lysyl-[protein] + NAD(+) + H2O = 2''-O-acetyl-ADP-D-ribose + nicotinamide + L-lysyl-[protein]. The enzyme catalyses N(6)-propanoyl-L-lysyl-[protein] + NAD(+) + H2O = 3''-O-propanoyl-ADP-D-ribose + nicotinamide + L-lysyl-[protein]. It carries out the reaction N(6)-(2E)-butenoyl-L-lysyl-[protein] + NAD(+) + H2O = 2''-O-(2E)-but-2-enoyl-ADP-D-ribose + nicotinamide + L-lysyl-[protein]. It catalyses the reaction N(6)-[(S)-lactoyl]-L-lysyl-[protein] + NAD(+) + H2O = 2''-O-(S)-lactoyl-ADP-D-ribose + nicotinamide + L-lysyl-[protein]. Its activity is regulated as follows. Activated by resveratrol (3,5,4'-trihydroxy-trans-stilbene), butein (3,4,2',4'-tetrahydroxychalcone), piceatannol (3,5,3',4'-tetrahydroxy-trans-stilbene), Isoliquiritigenin (4,2',4'-trihydroxychalcone), fisetin (3,7,3',4'-tetrahydroxyflavone) and quercetin (3,5,7,3',4'-pentahydroxyflavone). MAPK8/JNK1 and RPS19BP1/AROS act as positive regulators of deacetylation activity. Inhibited by nicotinamide. Negatively regulated by CCAR2. In terms of biological role, NAD-dependent protein deacetylase that links transcriptional regulation directly to intracellular energetics and participates in the coordination of several separated cellular functions such as cell cycle, response to DNA damage, metabolism, apoptosis and autophagy. Can modulate chromatin function through deacetylation of histones and can promote alterations in the methylation of histones and DNA, leading to transcriptional repression. Deacetylates a broad range of transcription factors and coregulators, thereby regulating target gene expression positively and negatively. Serves as a sensor of the cytosolic ratio of NAD(+)/NADH which is altered by glucose deprivation and metabolic changes associated with caloric restriction. Is essential in skeletal muscle cell differentiation and in response to low nutrients mediates the inhibitory effect on skeletal myoblast differentiation which also involves 5'-AMP-activated protein kinase (AMPK) and nicotinamide phosphoribosyltransferase (NAMPT). Component of the eNoSC (energy-dependent nucleolar silencing) complex, a complex that mediates silencing of rDNA in response to intracellular energy status and acts by recruiting histone-modifying enzymes. The eNoSC complex is able to sense the energy status of cell: upon glucose starvation, elevation of NAD(+)/NADP(+) ratio activates SIRT1, leading to histone H3 deacetylation followed by dimethylation of H3 at 'Lys-9' (H3K9me2) by SUV39H1 and the formation of silent chromatin in the rDNA locus. Deacetylates 'Lys-266' of SUV39H1, leading to its activation. Inhibits skeletal muscle differentiation by deacetylating PCAF and MYOD1. Deacetylates H2A and 'Lys-26' of H1-4. Deacetylates 'Lys-16' of histone H4 (in vitro). Involved in NR0B2/SHP corepression function through chromatin remodeling: Recruited to LRH1 target gene promoters by NR0B2/SHP thereby stimulating histone H3 and H4 deacetylation leading to transcriptional repression. Proposed to contribute to genomic integrity via positive regulation of telomere length; however, reports on localization to pericentromeric heterochromatin are conflicting. Proposed to play a role in constitutive heterochromatin (CH) formation and/or maintenance through regulation of the available pool of nuclear SUV39H1. Upon oxidative/metabolic stress decreases SUV39H1 degradation by inhibiting SUV39H1 polyubiquitination by MDM2. This increase in SUV39H1 levels enhances SUV39H1 turnover in CH, which in turn seems to accelerate renewal of the heterochromatin which correlates with greater genomic integrity during stress response. Deacetylates 'Lys-382' of p53/TP53 and impairs its ability to induce transcription-dependent proapoptotic program and modulate cell senescence. Deacetylates TAF1B and thereby represses rDNA transcription by the RNA polymerase I. Deacetylates MYC, promotes the association of MYC with MAX and decreases MYC stability leading to compromised transformational capability. Deacetylates FOXO3 in response to oxidative stress thereby increasing its ability to induce cell cycle arrest and resistance to oxidative stress but inhibiting FOXO3-mediated induction of apoptosis transcriptional activity; also leading to FOXO3 ubiquitination and protesomal degradation. Appears to have a similar effect on MLLT7/FOXO4 in regulation of transcriptional activity and apoptosis. Deacetylates DNMT1; thereby impairs DNMT1 methyltransferase-independent transcription repressor activity, modulates DNMT1 cell cycle regulatory function and DNMT1-mediated gene silencing. Deacetylates RELA/NF-kappa-B p65 thereby inhibiting its transactivating potential and augments apoptosis in response to TNF-alpha. Deacetylates HIF1A, KAT5/TIP60, RB1 and HIC1. Deacetylates FOXO1, which increases its DNA binding ability and enhances its transcriptional activity leading to increased gluconeogenesis in liver. Inhibits E2F1 transcriptional activity and apoptotic function, possibly by deacetylation. Involved in HES1- and HEY2-mediated transcriptional repression. In cooperation with MYCN seems to be involved in transcriptional repression of DUSP6/MAPK3 leading to MYCN stabilization by phosphorylation at 'Ser-62'. Deacetylates MEF2D. Required for antagonist-mediated transcription suppression of AR-dependent genes which may be linked to local deacetylation of histone H3. Represses HNF1A-mediated transcription. Required for the repression of ESRRG by CREBZF. Deacetylates NR1H3 and NR1H2 and deacetylation of NR1H3 at 'Lys-434' positively regulates transcription of NR1H3:RXR target genes, promotes NR1H3 proteasomal degradation and results in cholesterol efflux; a promoter clearing mechanism after reach round of transcription is proposed. Involved in lipid metabolism: deacetylates LPIN1, thereby inhibiting diacylglycerol synthesis. Implicated in regulation of adipogenesis and fat mobilization in white adipocytes by repression of PPARG which probably involves association with NCOR1 and SMRT/NCOR2. Deacetylates p300/EP300 and PRMT1. Deacetylates ACSS2 leading to its activation, and HMGCS1 deacetylation. Involved in liver and muscle metabolism. Through deacetylation and activation of PPARGC1A is required to activate fatty acid oxidation in skeletal muscle under low-glucose conditions and is involved in glucose homeostasis. Involved in regulation of PPARA and fatty acid beta-oxidation in liver. Involved in positive regulation of insulin secretion in pancreatic beta cells in response to glucose; the function seems to imply transcriptional repression of UCP2. Proposed to deacetylate IRS2 thereby facilitating its insulin-induced tyrosine phosphorylation. Deacetylates SREBF1 isoform SREBP-1C thereby decreasing its stability and transactivation in lipogenic gene expression. Involved in DNA damage response by repressing genes which are involved in DNA repair, such as XPC and TP73, deacetylating XRCC6/Ku70, and facilitating recruitment of additional factors to sites of damaged DNA, such as SIRT1-deacetylated NBN can recruit ATM to initiate DNA repair and SIRT1-deacetylated XPA interacts with RPA2. Also involved in DNA repair of DNA double-strand breaks by homologous recombination and specifically single-strand annealing independently of XRCC6/Ku70 and NBN. Promotes DNA double-strand breaks by mediating deacetylation of SIRT6. Transcriptional suppression of XPC probably involves an E2F4:RBL2 suppressor complex and protein kinase B (AKT) signaling. Transcriptional suppression of TP73 probably involves E2F4 and PCAF. Deacetylates WRN thereby regulating its helicase and exonuclease activities and regulates WRN nuclear translocation in response to DNA damage. Deacetylates APEX1 at 'Lys-6' and 'Lys-7' and stimulates cellular AP endonuclease activity by promoting the association of APEX1 to XRCC1. Catalyzes deacetylation of ERCC4/XPF, thereby impairing interaction with ERCC1 and nucleotide excision repair (NER). Increases p53/TP53-mediated transcription-independent apoptosis by blocking nuclear translocation of cytoplasmic p53/TP53 and probably redirecting it to mitochondria. Deacetylates XRCC6/Ku70 at 'Lys-537' and 'Lys-540' causing it to sequester BAX away from mitochondria thereby inhibiting stress-induced apoptosis. Is involved in autophagy, presumably by deacetylating ATG5, ATG7 and MAP1LC3B/ATG8. Deacetylates AKT1 which leads to enhanced binding of AKT1 and PDK1 to PIP3 and promotes their activation. Proposed to play role in regulation of STK11/LBK1-dependent AMPK signaling pathways implicated in cellular senescence which seems to involve the regulation of the acetylation status of STK11/LBK1. Can deacetylate STK11/LBK1 and thereby increase its activity, cytoplasmic localization and association with STRAD; however, the relevance of such activity in normal cells is unclear. In endothelial cells is shown to inhibit STK11/LBK1 activity and to promote its degradation. Deacetylates SMAD7 at 'Lys-64' and 'Lys-70' thereby promoting its degradation. Deacetylates CIITA and augments its MHC class II transactivation and contributes to its stability. Deacetylates MECOM/EVI1. Deacetylates PML at 'Lys-487' and this deacetylation promotes PML control of PER2 nuclear localization. During the neurogenic transition, represses selective NOTCH1-target genes through histone deacetylation in a BCL6-dependent manner and leading to neuronal differentiation. Regulates the circadian expression of several core clock genes, including BMAL1, RORC, PER2 and CRY1 and plays a critical role in maintaining a controlled rhythmicity in histone acetylation, thereby contributing to circadian chromatin remodeling. Deacetylates BMAL1 and histones at the circadian gene promoters in order to facilitate repression by inhibitory components of the circadian oscillator. Deacetylates PER2, facilitating its ubiquitination and degradation by the proteasome. Protects cardiomyocytes against palmitate-induced apoptosis. Deacetylates XBP1 isoform 2; deacetylation decreases protein stability of XBP1 isoform 2 and inhibits its transcriptional activity. Deacetylates PCK1 and directs its activity toward phosphoenolpyruvate production promoting gluconeogenesis. Involved in the CCAR2-mediated regulation of PCK1 and NR1D1. Deacetylates CTNB1 at 'Lys-49'. In POMC (pro-opiomelanocortin) neurons, required for leptin-induced activation of PI3K signaling. Deacetylates SOX9; promoting SOX9 nuclear localization and transactivation activity. Involved in the regulation of centrosome duplication: Deacetylates CENATAC in G1 phase, allowing for SASS6 accumulation on the centrosome and subsequent procentriole assembly. Deacetylates NDC80/HEC1. In addition to protein deacetylase activity, also acts as a protein-lysine deacylase by mediating protein delactylation, depropionylation and decrotonylation. Mediates depropionylation of Osterix (SP7). Catalyzes decrotonylation of histones; it however does not represent a major histone decrotonylase. Mediates protein delactylation of TEAD1 and YAP1. Functionally, deacetylates 'Lys-382' of p53/TP53, however with lower activity than isoform 1. In combination, the two isoforms exert an additive effect. Isoform 2 regulates p53/TP53 expression and cellular stress response and is in turn repressed by p53/TP53 presenting a SIRT1 isoform-dependent auto-regulatory loop. Catalytically inactive 75SirT1 may be involved in regulation of apoptosis. May be involved in protecting chondrocytes from apoptotic death by associating with cytochrome C and interfering with apoptosome assembly. The sequence is that of NAD-dependent protein deacetylase sirtuin-1 (Sirt1) from Mus musculus (Mouse).